A 169-amino-acid chain; its full sequence is Lipoprotein signal peptidase (169 aa).

4 helical membrane-spanning segments follow: residues L10 to F30, I40 to S60, W68 to L88, and G94 to Y114. Catalysis depends on residues D124 and D143. The chain crosses the membrane as a helical span at residues Y135–L155.

The protein belongs to the peptidase A8 family.

Its subcellular location is the cell inner membrane. The enzyme catalyses Release of signal peptides from bacterial membrane prolipoproteins. Hydrolyzes -Xaa-Yaa-Zaa-|-(S,diacylglyceryl)Cys-, in which Xaa is hydrophobic (preferably Leu), and Yaa (Ala or Ser) and Zaa (Gly or Ala) have small, neutral side chains.. It participates in protein modification; lipoprotein biosynthesis (signal peptide cleavage). In terms of biological role, this protein specifically catalyzes the removal of signal peptides from prolipoproteins. In Pseudomonas aeruginosa (strain UCBPP-PA14), this protein is Lipoprotein signal peptidase.